Consider the following 194-residue polypeptide: NADH-quinone oxidoreductase subunit B (194 aa).

[4Fe-4S] cluster contacts are provided by Cys73, Cys74, Cys138, and Cys168.

It belongs to the complex I 20 kDa subunit family. NDH-1 is composed of 14 different subunits. Subunits NuoB, C, D, E, F, and G constitute the peripheral sector of the complex. The cofactor is [4Fe-4S] cluster.

The protein localises to the cell inner membrane. It catalyses the reaction a quinone + NADH + 5 H(+)(in) = a quinol + NAD(+) + 4 H(+)(out). Functionally, NDH-1 shuttles electrons from NADH, via FMN and iron-sulfur (Fe-S) centers, to quinones in the respiratory chain. The immediate electron acceptor for the enzyme in this species is believed to be ubiquinone. Couples the redox reaction to proton translocation (for every two electrons transferred, four hydrogen ions are translocated across the cytoplasmic membrane), and thus conserves the redox energy in a proton gradient. This Rhizobium johnstonii (strain DSM 114642 / LMG 32736 / 3841) (Rhizobium leguminosarum bv. viciae) protein is NADH-quinone oxidoreductase subunit B.